The sequence spans 290 residues: Secreted chorismate mutase (290 aa).

A signal peptide spans 1 to 21 (MKLSVSIFVLLAVSAFGGGSA). Positions 117-140 (VVLSRDTVLDKPVVGKGIFPIGRR) are KWL1-binding extensive loop region (ELR). Residues asparagine 159 and asparagine 208 are each glycosylated (N-linked (GlcNAc...) asparagine).

As to quaternary structure, homodimer. Forms a heterodimer with the host cytosolic chorismate mutase CM2. Interacts with the host kiwellin KWL1 which acts as a defense protein that protects maize from infection.

Its subcellular location is the secreted. It localises to the host cytoplasm. The protein resides in the host cytosol. It carries out the reaction chorismate = prephenate. Its activity is regulated as follows. Contrary to classical chorismate mutases, CMU1 is not subject to allosteric regulation by tryptophan and tyrosine. Activity is decreased in a non-competitive and allosteric manner by the binding of the host defense kiwellin KWL1 which probably blocks substrate access to the active site of CMU1. In terms of biological role, secreted chorismate mutase that is one component of a cocktail of effectors shaping the host metabolome and acting as virulence factors. The enzyme is taken up by plant cells, can spread to neighboring cells where it affects the biosynthesis of the plant immune signal salicylic acid by channelling chorismate into the phenylpropanoid pathway. Interferes with the activity of host cytosolic chorismate mutase CM2 through heterodimerization. In Mycosarcoma maydis (Corn smut fungus), this protein is Secreted chorismate mutase (CMU1).